We begin with the raw amino-acid sequence, 209 residues long: Outer-membrane lipoprotein carrier protein (209 aa).

Positions 1–21 (MKLLKLLSVAALSAASMMANA) are cleaved as a signal peptide.

This sequence belongs to the LolA family. As to quaternary structure, monomer.

Its subcellular location is the periplasm. Its function is as follows. Participates in the translocation of lipoproteins from the inner membrane to the outer membrane. Only forms a complex with a lipoprotein if the residue after the N-terminal Cys is not an aspartate (The Asp acts as a targeting signal to indicate that the lipoprotein should stay in the inner membrane). This Hahella chejuensis (strain KCTC 2396) protein is Outer-membrane lipoprotein carrier protein.